The following is a 502-amino-acid chain: Maturase K (502 aa).

This sequence belongs to the intron maturase 2 family. MatK subfamily.

The protein resides in the plastid. It is found in the chloroplast. Its function is as follows. Usually encoded in the trnK tRNA gene intron. Probably assists in splicing its own and other chloroplast group II introns. The polypeptide is Maturase K (Vaccinium vitis-idaea (Mountain cranberry)).